A 745-amino-acid chain; its full sequence is 1,4-alpha-glucan branching enzyme GlgB (745 aa).

Asp416 acts as the Nucleophile in catalysis. Glu469 serves as the catalytic Proton donor.

This sequence belongs to the glycosyl hydrolase 13 family. GlgB subfamily. Monomer.

It carries out the reaction Transfers a segment of a (1-&gt;4)-alpha-D-glucan chain to a primary hydroxy group in a similar glucan chain.. Its pathway is glycan biosynthesis; glycogen biosynthesis. Its function is as follows. Catalyzes the formation of the alpha-1,6-glucosidic linkages in glycogen by scission of a 1,4-alpha-linked oligosaccharide from growing alpha-1,4-glucan chains and the subsequent attachment of the oligosaccharide to the alpha-1,6 position. In Shewanella sp. (strain MR-4), this protein is 1,4-alpha-glucan branching enzyme GlgB.